Here is a 218-residue protein sequence, read N- to C-terminus: Serine/threonine-protein phosphatase 2 (218 aa).

Residues D22, H24, D51, and N77 each coordinate Mn(2+). H78 serves as the catalytic Proton donor. Residue H187 coordinates Mn(2+).

The protein belongs to the PPP phosphatase family. PP-1 subfamily. Mn(2+) is required as a cofactor.

It carries out the reaction O-phospho-L-seryl-[protein] + H2O = L-seryl-[protein] + phosphate. The enzyme catalyses O-phospho-L-threonyl-[protein] + H2O = L-threonyl-[protein] + phosphate. Inhibited by cadmium, copper, zinc when added activity but with less efficiency. Can hydrolyze phosphorylated Ser-, Thr- or Tyr-substrates in vitro. The natural substrate is unknown. The sequence is that of Serine/threonine-protein phosphatase 2 (pphB) from Salmonella typhimurium (strain LT2 / SGSC1412 / ATCC 700720).